A 357-amino-acid polypeptide reads, in one-letter code: ATP-dependent 6-phosphofructokinase (357 aa).

Residues Gly-12, 80–81, and 107–110 contribute to the ATP site; these read KG and GDGS. Asp-108 provides a ligand contact to Mg(2+). Residues 131–133, Arg-168, 175–177, Glu-229, Arg-272, and 278–281 contribute to the substrate site; these read TID, MGR, and HIQR. The active-site Proton acceptor is Asp-133.

This sequence belongs to the phosphofructokinase type A (PFKA) family. Mixed-substrate PFK group III subfamily. In terms of assembly, homodimer or homotetramer. Mg(2+) is required as a cofactor.

It localises to the cytoplasm. It carries out the reaction beta-D-fructose 6-phosphate + ATP = beta-D-fructose 1,6-bisphosphate + ADP + H(+). Its pathway is carbohydrate degradation; glycolysis; D-glyceraldehyde 3-phosphate and glycerone phosphate from D-glucose: step 3/4. Subject to allosteric activation by ADP and other diphosphonucleosides, and inhibition by phosphoenolpyruvate. Functionally, catalyzes the phosphorylation of D-fructose 6-phosphate to fructose 1,6-bisphosphate by ATP, the first committing step of glycolysis. The sequence is that of ATP-dependent 6-phosphofructokinase from Trichormus variabilis (strain ATCC 29413 / PCC 7937) (Anabaena variabilis).